The primary structure comprises 156 residues: Regulatory protein RecX (156 aa).

This sequence belongs to the RecX family.

The protein resides in the cytoplasm. In terms of biological role, modulates RecA activity. This Pseudomonas putida (strain W619) protein is Regulatory protein RecX.